A 225-amino-acid chain; its full sequence is Large ribosomal subunit protein eL15 (225 aa).

Positions 159-180 are disordered; that stretch reads RPFRGLTSAGKKMRGLRKSRGL. Positions 169–180 are enriched in basic residues; it reads KKMRGLRKSRGL.

Belongs to the eukaryotic ribosomal protein eL15 family.

This chain is Large ribosomal subunit protein eL15 (rpl15e), found in Aeropyrum pernix (strain ATCC 700893 / DSM 11879 / JCM 9820 / NBRC 100138 / K1).